Here is a 365-residue protein sequence, read N- to C-terminus: Homeobox protein Nkx-6.1 (365 aa).

Residues 35-136 (LYPAAYPPLP…SSSSASATSA (102 aa)) form a disordered region. Composition is skewed to low complexity over residues 48–59 (PSSSSSSSSSSS), 69–92 (PGGL…QLSA), and 110–136 (ASGA…ATSA). The interval 102–269 (LSRPSMPVAS…KYLAGPERAR (168 aa)) is repressor domain. R190 carries the asymmetric dimethylarginine modification. The homeobox DNA-binding region spans 237-296 (RKHTRPTFSGQQIFALEKTFEQTKYLAGPERARLAYSLGMTESQVKVWFQNRRTKWRKKH). The interval 295 to 365 (KHAAEMATAK…LHASEAEGSS (71 aa)) is disordered. Over residues 305–318 (KKQDSETERLKGTS) the composition is skewed to basic and acidic residues. The tract at residues 307 to 365 (QDSETERLKGTSENEEDDDDYNKPLDPNSDDEKITQLLKKHKSSGGSLLLHASEAEGSS) is involved in DNA-binding.

Pancreatic beta cells.

The protein resides in the nucleus. Functionally, transcription factor which binds to specific A/T-rich DNA sequences in the promoter regions of a number of genes. Involved in the development of insulin-producing beta cells in the islets of Langerhans at the secondary transition. Together with NKX2-2 and IRX3 acts to restrict the generation of motor neurons to the appropriate region of the neural tube. Belongs to the class II proteins of neuronal progenitor factors, which are induced by SHH signals. This Rattus norvegicus (Rat) protein is Homeobox protein Nkx-6.1 (Nkx6-1).